Reading from the N-terminus, the 81-residue chain is Sulfur carrier protein TusA (81 aa).

Catalysis depends on C19, which acts as the Cysteine persulfide intermediate.

Belongs to the sulfur carrier protein TusA family.

Its subcellular location is the cytoplasm. In terms of biological role, sulfur carrier protein which probably makes part of a sulfur-relay system. The polypeptide is Sulfur carrier protein TusA (Shewanella sp. (strain MR-4)).